We begin with the raw amino-acid sequence, 181 residues long: TATA-box-binding protein (181 aa).

2 tandem repeats follow at residues 7 to 83 (IVNV…IKEL) and 98 to 173 (VQNM…SATL).

Belongs to the TBP family.

In terms of biological role, general factor that plays a role in the activation of archaeal genes transcribed by RNA polymerase. Binds specifically to the TATA box promoter element which lies close to the position of transcription initiation. The polypeptide is TATA-box-binding protein (Methanococcus vannielii (strain ATCC 35089 / DSM 1224 / JCM 13029 / OCM 148 / SB)).